The sequence spans 680 residues: ATPase family AAA domain-containing protein FIGL1 (680 aa).

3 disordered regions span residues 214–234, 250–275, and 288–352; these read YGNSIGKPDNQRKTSVNNQDR, FGTKRPHAETSSLANDGEVKEDGAPN, and VRQK…GGKT. Over residues 295 to 308 the composition is skewed to polar residues; it reads TESPSSCLSPQSDK. Positions 313–323 are enriched in gly residues; that stretch reads RGYGSRSGGLR. Residues 336-346 show a composition bias toward polar residues; that stretch reads TNGNNVGNLTS. ATP-binding positions include Ala406 and 446-451; that span reads GTGKTM.

Belongs to the AAA ATPase family. The cofactor is Mg(2+).

It localises to the nucleus. The enzyme catalyses ATP + H2O = ADP + phosphate + H(+). Its function is as follows. Involved in DNA double-strand break (DBS) repair via homologous recombination (HR). Limits class II meiotic crossover (CO) formation by regulating the invasion step of meiotic HR. May counteract DMC1 and RAD51-mediated inter-homolog strand invasion to limit CO formation. Functions independently of FANCM. The polypeptide is ATPase family AAA domain-containing protein FIGL1 (Arabidopsis thaliana (Mouse-ear cress)).